The chain runs to 251 residues: Flap endonuclease Xni (251 aa).

Residue aspartate 104 participates in Mg(2+) binding. Residues 160-249 (VTPEQLADYW…LDGNLQQLRL (90 aa)) form the 5'-3' exonuclease domain. Leucine 171, alanine 172, proline 180, valine 182, and isoleucine 185 together coordinate K(+). An interaction with DNA region spans residues 184–189 (GIGPKS).

Belongs to the Xni family. Mg(2+) serves as cofactor. The cofactor is K(+).

Its function is as follows. Has flap endonuclease activity. During DNA replication, flap endonucleases cleave the 5'-overhanging flap structure that is generated by displacement synthesis when DNA polymerase encounters the 5'-end of a downstream Okazaki fragment. This chain is Flap endonuclease Xni, found in Klebsiella pneumoniae subsp. pneumoniae (strain ATCC 700721 / MGH 78578).